We begin with the raw amino-acid sequence, 164 residues long: ATP synthase subunit b (164 aa).

The chain crosses the membrane as a helical span at residues 10–30 (LLISQIVNFCLLAFLLNTFLY).

The protein belongs to the ATPase B chain family. In terms of assembly, F-type ATPases have 2 components, F(1) - the catalytic core - and F(0) - the membrane proton channel. F(1) has five subunits: alpha(3), beta(3), gamma(1), delta(1), epsilon(1). F(0) has three main subunits: a(1), b(2) and c(10-14). The alpha and beta chains form an alternating ring which encloses part of the gamma chain. F(1) is attached to F(0) by a central stalk formed by the gamma and epsilon chains, while a peripheral stalk is formed by the delta and b chains.

Its subcellular location is the cell membrane. Its function is as follows. F(1)F(0) ATP synthase produces ATP from ADP in the presence of a proton or sodium gradient. F-type ATPases consist of two structural domains, F(1) containing the extramembraneous catalytic core and F(0) containing the membrane proton channel, linked together by a central stalk and a peripheral stalk. During catalysis, ATP synthesis in the catalytic domain of F(1) is coupled via a rotary mechanism of the central stalk subunits to proton translocation. Component of the F(0) channel, it forms part of the peripheral stalk, linking F(1) to F(0). The protein is ATP synthase subunit b of Herpetosiphon aurantiacus (strain ATCC 23779 / DSM 785 / 114-95).